A 460-amino-acid polypeptide reads, in one-letter code: Bifunctional protein GlmU (460 aa).

The pyrophosphorylase stretch occupies residues 1–235 (MALSAAIVLA…PLTVEGVNDR (235 aa)). Residues 9-12 (LAAG), K23, Q76, and 81-82 (GT) contribute to the UDP-N-acetyl-alpha-D-glucosamine site. D109 serves as a coordination point for Mg(2+). G146, E161, N176, and N233 together coordinate UDP-N-acetyl-alpha-D-glucosamine. N233 is a binding site for Mg(2+). Residues 236–256 (VQLAALSKTYNRRVCERWMRN) form a linker region. Positions 257–460 (GVTILDPETT…VEGWKPAWER (204 aa)) are N-acetyltransferase. The UDP-N-acetyl-alpha-D-glucosamine site is built by R338 and K356. The Proton acceptor role is filled by H368. Positions 371 and 382 each coordinate UDP-N-acetyl-alpha-D-glucosamine. Acetyl-CoA is bound by residues 391–392 (NY) and A428.

This sequence in the N-terminal section; belongs to the N-acetylglucosamine-1-phosphate uridyltransferase family. The protein in the C-terminal section; belongs to the transferase hexapeptide repeat family. As to quaternary structure, homotrimer. It depends on Mg(2+) as a cofactor.

It localises to the cytoplasm. It catalyses the reaction alpha-D-glucosamine 1-phosphate + acetyl-CoA = N-acetyl-alpha-D-glucosamine 1-phosphate + CoA + H(+). The enzyme catalyses N-acetyl-alpha-D-glucosamine 1-phosphate + UTP + H(+) = UDP-N-acetyl-alpha-D-glucosamine + diphosphate. The protein operates within nucleotide-sugar biosynthesis; UDP-N-acetyl-alpha-D-glucosamine biosynthesis; N-acetyl-alpha-D-glucosamine 1-phosphate from alpha-D-glucosamine 6-phosphate (route II): step 2/2. It functions in the pathway nucleotide-sugar biosynthesis; UDP-N-acetyl-alpha-D-glucosamine biosynthesis; UDP-N-acetyl-alpha-D-glucosamine from N-acetyl-alpha-D-glucosamine 1-phosphate: step 1/1. Its pathway is bacterial outer membrane biogenesis; LPS lipid A biosynthesis. Catalyzes the last two sequential reactions in the de novo biosynthetic pathway for UDP-N-acetylglucosamine (UDP-GlcNAc). The C-terminal domain catalyzes the transfer of acetyl group from acetyl coenzyme A to glucosamine-1-phosphate (GlcN-1-P) to produce N-acetylglucosamine-1-phosphate (GlcNAc-1-P), which is converted into UDP-GlcNAc by the transfer of uridine 5-monophosphate (from uridine 5-triphosphate), a reaction catalyzed by the N-terminal domain. This is Bifunctional protein GlmU from Bifidobacterium longum subsp. infantis (strain ATCC 15697 / DSM 20088 / JCM 1222 / NCTC 11817 / S12).